The following is a 99-amino-acid chain: Aspartyl/glutamyl-tRNA(Asn/Gln) amidotransferase subunit C (99 aa).

This sequence belongs to the GatC family. As to quaternary structure, heterotrimer of A, B and C subunits.

It catalyses the reaction L-glutamyl-tRNA(Gln) + L-glutamine + ATP + H2O = L-glutaminyl-tRNA(Gln) + L-glutamate + ADP + phosphate + H(+). The enzyme catalyses L-aspartyl-tRNA(Asn) + L-glutamine + ATP + H2O = L-asparaginyl-tRNA(Asn) + L-glutamate + ADP + phosphate + 2 H(+). In terms of biological role, allows the formation of correctly charged Asn-tRNA(Asn) or Gln-tRNA(Gln) through the transamidation of misacylated Asp-tRNA(Asn) or Glu-tRNA(Gln) in organisms which lack either or both of asparaginyl-tRNA or glutaminyl-tRNA synthetases. The reaction takes place in the presence of glutamine and ATP through an activated phospho-Asp-tRNA(Asn) or phospho-Glu-tRNA(Gln). The polypeptide is Aspartyl/glutamyl-tRNA(Asn/Gln) amidotransferase subunit C (Methylibium petroleiphilum (strain ATCC BAA-1232 / LMG 22953 / PM1)).